Consider the following 543-residue polypeptide: Transmembrane protease serine 13 (543 aa).

2 disordered regions span residues 1–96 (MDRG…TRVY) and 109–129 (RASPARSAPATRATRESPGLS). Residues 1–143 (MDRGSHRNSS…SWQETQRQLP (143 aa)) lie on the Cytoplasmic side of the membrane. 2 repeat units span residues 14-17 (TPPQ) and 18-22 (ASPAR). Residues 14–49 (TPPQASPARTSPARAPPQASPARTPPQASPARTPPQ) form a 4 X 4 AA repeats of T-P-P-Q region. Positions 18–69 (ASPARTSPARAPPQASPARTPPQASPARTPPQASPARAPPPQASPARASPAR) are 8 X 5 AA repeats of A-S-P-A-R. One copy of the 2-2; approximate repeat lies at 23-27 (TSPAR). The span at 27 to 60 (RAPPQASPARTPPQASPARTPPQASPARAPPPQA) shows a compositional bias: pro residues. The 1-2; approximate repeat unit spans residues 28–31 (APPQ). Tandem repeats lie at residues 32–36 (ASPAR), 37–40 (TPPQ), 41–45 (ASPAR), 46–49 (TPPQ), and 50–54 (ASPAR). Residues 55–59 (APPPQ) form a 2-6; approximate repeat. Repeat copies occupy residues 60-64 (ASPAR) and 65-69 (ASPAR). 2 stretches are compositionally biased toward low complexity: residues 61-94 (SPARASPARAPPSRSSSGRSSSARSASTTSSPTR) and 109-120 (RASPARSAPATR). The helical; Signal-anchor for type II membrane protein transmembrane segment at 144–164 (LIGCVILLISLVISLILLFYF) threads the bilayer. Over 165-543 (WRGHTGIKYK…MESEVRFRKS (379 aa)) the chain is Extracellular. The 23-residue stretch at 180 to 202 (CPIHAVRCDGVVDCKMKSDELGC) folds into the LDL-receptor class A domain. The SRCR domain occupies 199 to 301 (ELGCVRFDWD…HCGLRAMTGR (103 aa)). 3 disulfides stabilise this stretch: Cys226–Cys290, Cys239–Cys293, and Cys327–Cys343. N-linked (GlcNAc...) asparagine glycans are attached at residues Asn231 and Asn268. Positions 302-535 (IVGGALTSES…VLPWIYRKME (234 aa)) constitute a Peptidase S1 domain. His342 (charge relay system) is an active-site residue. Asn381 is a glycosylation site (N-linked (GlcNAc...) asparagine). Asp390 serves as the catalytic Charge relay system. A glycan (N-linked (GlcNAc...) asparagine) is linked at Asn421. Cystine bridges form between Cys424-Cys493, Cys456-Cys472, and Cys483-Cys511. The active-site Charge relay system is Ser487.

This sequence belongs to the peptidase S1 family. As to quaternary structure, interacts with SPINT1/HAI-1; the interaction promotes the phosphorylation and cell membrane localization of TMPRSS13. Interacts with SPINT2/HAI-2; the interaction promotes the phosphorylation and cell membrane localization of TMPRSS13. Post-translationally, the inactive zymogen is post-translationally modified and then trafficked to the cell surface, whereby it undergoes autocatalytic cleavage resulting in an activated form that is released extracellularly. In terms of processing, phosphorylation is required for localization at the cell surface. Phosphorylation increases following inhibition of protease activity by SPINT2/HAI-2. In terms of tissue distribution, expressed in the suprabasal squamous epithelium of the epidermis, hair follicles, oral epithelium, cornea, upper digestive tract, transitional epithelium of the bladder, prostate, heart, intestine, kidney and thymus.

The protein localises to the cell membrane. Its subcellular location is the secreted. The protein resides in the cytoplasm. Cleavage of HGF is inhibited by SPINT1/HAI-1 via the BPTI/Kunitz inhibitor 1 domain. Serine protease. Cleaves the proform of PRSS8/prostasin to form the active protein. Cleaves the proform of HGF to form the active protein which promotes MAPK signaling. Promotes the formation of the stratum corneum and subsequently the epidermal barrier in embryos. This Mus musculus (Mouse) protein is Transmembrane protease serine 13 (Tmprss13).